The sequence spans 492 residues: UDP-N-acetylmuramate--L-alanine ligase (492 aa).

126–132 (GTHGKTT) serves as a coordination point for ATP.

This sequence belongs to the MurCDEF family.

It localises to the cytoplasm. It catalyses the reaction UDP-N-acetyl-alpha-D-muramate + L-alanine + ATP = UDP-N-acetyl-alpha-D-muramoyl-L-alanine + ADP + phosphate + H(+). The protein operates within cell wall biogenesis; peptidoglycan biosynthesis. Cell wall formation. This Serratia proteamaculans (strain 568) protein is UDP-N-acetylmuramate--L-alanine ligase.